We begin with the raw amino-acid sequence, 32 residues long: Ranatuerin-2CSa (32 aa).

Cys-27 and Cys-32 are oxidised to a cystine.

In terms of tissue distribution, expressed by the skin glands.

It is found in the secreted. Its subcellular location is the target cell membrane. Antibacterial peptide with amphipathic alpha-helical structure. Active against E.coli ATCC 25726 (MIC=4-5 uM) and S.aureus ATCC 25923 (MIC=8-10 uM). Has a weak hemolytic activity on human erythrocytes (LC(50)=150-160 uM). The protein is Ranatuerin-2CSa of Rana cascadae (Cascades frog).